Consider the following 256-residue polypeptide: Deoxyribose-phosphate aldolase (256 aa).

Asp-102 serves as the catalytic Proton donor/acceptor. Lys-165 serves as the catalytic Schiff-base intermediate with acetaldehyde. Lys-197 serves as the catalytic Proton donor/acceptor.

This sequence belongs to the DeoC/FbaB aldolase family. DeoC type 2 subfamily.

The protein localises to the cytoplasm. It carries out the reaction 2-deoxy-D-ribose 5-phosphate = D-glyceraldehyde 3-phosphate + acetaldehyde. Its pathway is carbohydrate degradation; 2-deoxy-D-ribose 1-phosphate degradation; D-glyceraldehyde 3-phosphate and acetaldehyde from 2-deoxy-alpha-D-ribose 1-phosphate: step 2/2. Functionally, catalyzes a reversible aldol reaction between acetaldehyde and D-glyceraldehyde 3-phosphate to generate 2-deoxy-D-ribose 5-phosphate. This is Deoxyribose-phosphate aldolase from Shewanella sp. (strain MR-7).